A 320-amino-acid chain; its full sequence is o-succinylbenzoate synthase (320 aa).

The active-site Proton donor is Lys133. The Mg(2+) site is built by Asp161, Glu190, and Asp213. The active-site Proton acceptor is Lys235.

It belongs to the mandelate racemase/muconate lactonizing enzyme family. MenC type 1 subfamily. A divalent metal cation serves as cofactor.

The catalysed reaction is (1R,6R)-6-hydroxy-2-succinyl-cyclohexa-2,4-diene-1-carboxylate = 2-succinylbenzoate + H2O. Its pathway is quinol/quinone metabolism; 1,4-dihydroxy-2-naphthoate biosynthesis; 1,4-dihydroxy-2-naphthoate from chorismate: step 4/7. It participates in quinol/quinone metabolism; menaquinone biosynthesis. Functionally, converts 2-succinyl-6-hydroxy-2,4-cyclohexadiene-1-carboxylate (SHCHC) to 2-succinylbenzoate (OSB). The protein is o-succinylbenzoate synthase of Citrobacter koseri (strain ATCC BAA-895 / CDC 4225-83 / SGSC4696).